Consider the following 1465-residue polypeptide: Myomesin-2 (1465 aa).

Positions 38-61 (ASTQASSQKSLSQRSSSQRASSQT) are disordered. Over residues 41–61 (QASSQKSLSQRSSSQRASSQT) the composition is skewed to low complexity. Ig-like C2-type domains follow at residues 154–245 (PEIL…AAVV) and 266–371 (PLSS…AFLF). Fibronectin type-III domains lie at 385–480 (APMD…ALDP), 513–608 (PPTG…AQDV), 614–707 (APGR…VQAA), 710–812 (VPSH…TMPE), and 815–912 (PAYD…ARPG). 3 consecutive Ig-like C2-type domains span residues 904 to 1002 (PVLV…EELE), 1130 to 1211 (PHFA…QDVS), and 1345 to 1434 (RLIG…VTVS). Residues 1442-1465 (IPDMAPPQQAKPKLIPASASAAGQ) form a disordered region.

Interacts with TTN/titin.

It is found in the cytoplasm. It localises to the myofibril. Its subcellular location is the sarcomere. The protein localises to the m line. Major component of the vertebrate myofibrillar M band. Binds myosin, titin, and light meromyosin. This binding is dose dependent. The protein is Myomesin-2 (MYOM2) of Homo sapiens (Human).